Here is a 157-residue protein sequence, read N- to C-terminus: Cyclic pyranopterin monophosphate synthase (157 aa).

Substrate is bound by residues 74–76 (MCH) and 111–112 (ME). D126 is an active-site residue.

The protein belongs to the MoaC family. Homohexamer; trimer of dimers.

The catalysed reaction is (8S)-3',8-cyclo-7,8-dihydroguanosine 5'-triphosphate = cyclic pyranopterin phosphate + diphosphate. The protein operates within cofactor biosynthesis; molybdopterin biosynthesis. Functionally, catalyzes the conversion of (8S)-3',8-cyclo-7,8-dihydroguanosine 5'-triphosphate to cyclic pyranopterin monophosphate (cPMP). This Carboxydothermus hydrogenoformans (strain ATCC BAA-161 / DSM 6008 / Z-2901) protein is Cyclic pyranopterin monophosphate synthase.